The following is a 371-amino-acid chain: NADH-ubiquinone oxidoreductase chain 1 (371 aa).

The next 10 membrane-spanning stretches (helical) occupy residues 7–27 (IISI…VAYV), 44–64 (PNAV…KLLL), 77–97 (LFFL…AVIP), 109–129 (LGIL…LLAG), 153–173 (LVLS…NLGV), 180–200 (AVLF…GSIA), 226–246 (AVVF…MCIL), 263–283 (VFNI…NWMV), 302–322 (GWLY…IFIL), and 338–358 (FCWT…PCIL).

The protein belongs to the complex I subunit 1 family.

Its subcellular location is the mitochondrion inner membrane. The enzyme catalyses a ubiquinone + NADH + 5 H(+)(in) = a ubiquinol + NAD(+) + 4 H(+)(out). Functionally, core subunit of the mitochondrial membrane respiratory chain NADH dehydrogenase (Complex I) that is believed to belong to the minimal assembly required for catalysis. Complex I functions in the transfer of electrons from NADH to the respiratory chain. The immediate electron acceptor for the enzyme is believed to be ubiquinone. The chain is NADH-ubiquinone oxidoreductase chain 1 (ndh-1) from Neurospora crassa (strain ATCC 24698 / 74-OR23-1A / CBS 708.71 / DSM 1257 / FGSC 987).